The primary structure comprises 449 residues: Asparagine--tRNA ligase (449 aa).

It belongs to the class-II aminoacyl-tRNA synthetase family. In terms of assembly, homodimer.

It localises to the cytoplasm. It catalyses the reaction tRNA(Asn) + L-asparagine + ATP = L-asparaginyl-tRNA(Asn) + AMP + diphosphate + H(+). This chain is Asparagine--tRNA ligase, found in Mesomycoplasma hyopneumoniae (strain 7448) (Mycoplasma hyopneumoniae).